Reading from the N-terminus, the 522-residue chain is uncharacterized protein (522 aa).

Over residues 1–11 (MSSITSRVSSR) the composition is skewed to low complexity. The disordered stretch occupies residues 1-20 (MSSITSRVSSRSSHELTEKK). The next 12 membrane-spanning stretches (helical) occupy residues 69 to 89 (VLWK…MIQY), 116 to 136 (SMTT…AILM), 141 to 161 (LSYF…LMAA), 173 to 193 (FLAG…TAMW), 204 to 224 (LCWY…SYGL), 236 to 256 (YVFI…VFIP), 303 to 323 (VIMI…GVFS), 338 to 358 (AVLN…SGVL), 367 to 387 (LLIG…IWKI), 396 to 416 (LVGV…LSLI), 428 to 448 (VTSA…PQLF), and 462 to 482 (AMIV…GYYI).

This sequence belongs to the major facilitator superfamily. Allantoate permease family.

It is found in the endoplasmic reticulum. Its subcellular location is the membrane. This is an uncharacterized protein from Schizosaccharomyces pombe (strain 972 / ATCC 24843) (Fission yeast).